The chain runs to 217 residues: MNQTLLSSFGTAFERVEHALDALREGRGVMVLDDEDRENEGDMIFAAETMTVEQMALTIRHGSGIVCLCLTEERRKQLDLPMMVENNTSAYGTGFTVTIEAAEGVTTGVSAADRVTTVRAAIADGAKPSDLNRPGHVFPLRAQPGGVLTRGGHTEATIDLVTLAGFKPAGVLCELTNDDGTMARAPECIKFAQQHNMAVVTIEDLVAYRREHERKAS.

Residues 37–38 (RE), aspartate 42, 150–154 (RGGHT), and glutamate 174 each bind D-ribulose 5-phosphate. A Mg(2+)-binding site is contributed by glutamate 38. Histidine 153 contributes to the Mg(2+) binding site.

The protein belongs to the DHBP synthase family. In terms of assembly, homodimer. Requires Mg(2+) as cofactor. Mn(2+) is required as a cofactor.

The enzyme catalyses D-ribulose 5-phosphate = (2S)-2-hydroxy-3-oxobutyl phosphate + formate + H(+). Its pathway is cofactor biosynthesis; riboflavin biosynthesis; 2-hydroxy-3-oxobutyl phosphate from D-ribulose 5-phosphate: step 1/1. Its function is as follows. Catalyzes the conversion of D-ribulose 5-phosphate to formate and 3,4-dihydroxy-2-butanone 4-phosphate. This is 3,4-dihydroxy-2-butanone 4-phosphate synthase from Klebsiella pneumoniae subsp. pneumoniae (strain ATCC 700721 / MGH 78578).